The primary structure comprises 1480 residues: DNA polymerase zeta catalytic subunit (1480 aa).

Positions 403–488 (DRSKFPKSPL…GDTRKAGKRL (86 aa)) are disordered. Residues 411–427 (PLNSSQEVTIHSSQDRQ) show a composition bias toward polar residues. Residues 457–468 (TKREIEFCRDLP) show a composition bias toward basic and acidic residues. The span at 470–479 (RPTSSEPNQG) shows a compositional bias: polar residues. Zn(2+) contacts are provided by Cys-1381, Cys-1384, Cys-1400, and Cys-1403. Residues 1381-1403 (CSSCLKNNIEIIPDKINSLCSDC) form a CysA-type zinc finger. Positions 1432, 1435, 1446, and 1451 each coordinate [4Fe-4S] cluster. Positions 1432–1451 (CRGCSKLSSSDPVLCKSNSC) match the CysB motif motif.

It belongs to the DNA polymerase type-B family. In terms of assembly, forms DNA polymerase zeta with rev7. The cofactor is [4Fe-4S] cluster.

It localises to the mitochondrion. Its subcellular location is the nucleus. The enzyme catalyses DNA(n) + a 2'-deoxyribonucleoside 5'-triphosphate = DNA(n+1) + diphosphate. In terms of biological role, nonessential DNA polymerase. Required for DNA damage induced mutagenesis. Involved in DNA repair, mitochondrial DNA repair and translesion synthesis. Has a role in the bypass of abasic (AP) sites. The chain is DNA polymerase zeta catalytic subunit (rev3) from Schizosaccharomyces pombe (strain 972 / ATCC 24843) (Fission yeast).